Reading from the N-terminus, the 675-residue chain is Polyphosphate kinase (675 aa).

Residue Asn42 participates in ATP binding. Positions 372 and 401 each coordinate Mg(2+). His431 serves as the catalytic Phosphohistidine intermediate. ATP is bound by residues Tyr464, Arg558, and His586.

This sequence belongs to the polyphosphate kinase 1 (PPK1) family. Mg(2+) is required as a cofactor. An intermediate of this reaction is the autophosphorylated ppk in which a phosphate is covalently linked to a histidine residue through a N-P bond.

The catalysed reaction is [phosphate](n) + ATP = [phosphate](n+1) + ADP. Catalyzes the reversible transfer of the terminal phosphate of ATP to form a long-chain polyphosphate (polyP). This is Polyphosphate kinase from Helicobacter pylori (strain ATCC 700392 / 26695) (Campylobacter pylori).